Consider the following 277-residue polypeptide: Large ribosomal subunit protein uL2c (277 aa).

2 disordered regions span residues 24–57 and 226–266; these read IVQSKPEKQLTSGQHRKKGRNNRGVITSRHRGGG and NAAD…HKYS.

It belongs to the universal ribosomal protein uL2 family. As to quaternary structure, part of the 50S ribosomal subunit.

It localises to the plastid. The protein localises to the chloroplast. The sequence is that of Large ribosomal subunit protein uL2c (rpl2) from Zygnema circumcarinatum (Green alga).